Reading from the N-terminus, the 206-residue chain is Ectodysplasin-A receptor-associated adapter protein (206 aa).

2 disordered regions span residues 1–36 and 52–77; these read MRPLQSYKAFEDHMAQEPVEDTDPSTLSFNTSDKYP and TLNCPPNSDMKNQGEENGFPDSTGDP. Composition is skewed to polar residues over residues 24 to 33 and 52 to 62; these read PSTLSFNTSD and TLNCPPNSDMK. A Death domain is found at 114 to 190; sequence DVIRIKLDPC…DVEKVLRRWV (77 aa).

As to quaternary structure, self-associates and binds to EDAR, TRAF1, TRAF2 and TRAF3.

The protein localises to the cytoplasm. Adapter protein that interacts with EDAR DEATH domain and couples the receptor to EDA signaling pathway during morphogenesis of ectodermal organs. Mediates the activation of NF-kappa-B. The chain is Ectodysplasin-A receptor-associated adapter protein (EDARADD) from Macaca fascicularis (Crab-eating macaque).